Consider the following 382-residue polypeptide: Lipoyl synthase, mitochondrial (382 aa).

The transit peptide at 1–30 (MHGRRHLAASLARALTYAPSRSISSTPSLL) directs the protein to the mitochondrion. Polar residues predominate over residues 25 to 34 (STPSLLQTLD). Residues 25–47 (STPSLLQTLDPSTPSPAAAPPTA) are disordered. [4Fe-4S] cluster contacts are provided by Cys112, Cys117, Cys123, Cys143, Cys147, Cys150, and Ser359. One can recognise a Radical SAM core domain in the interval 128–348 (ETGTATATIM…RSLGVDMGFR (221 aa)).

Belongs to the radical SAM superfamily. Lipoyl synthase family. [4Fe-4S] cluster is required as a cofactor.

The protein localises to the mitochondrion. It carries out the reaction [[Fe-S] cluster scaffold protein carrying a second [4Fe-4S](2+) cluster] + N(6)-octanoyl-L-lysyl-[protein] + 2 oxidized [2Fe-2S]-[ferredoxin] + 2 S-adenosyl-L-methionine + 4 H(+) = [[Fe-S] cluster scaffold protein] + N(6)-[(R)-dihydrolipoyl]-L-lysyl-[protein] + 4 Fe(3+) + 2 hydrogen sulfide + 2 5'-deoxyadenosine + 2 L-methionine + 2 reduced [2Fe-2S]-[ferredoxin]. Its pathway is protein modification; protein lipoylation via endogenous pathway; protein N(6)-(lipoyl)lysine from octanoyl-[acyl-carrier-protein]: step 2/2. Functionally, catalyzes the radical-mediated insertion of two sulfur atoms into the C-6 and C-8 positions of the octanoyl moiety bound to the lipoyl domains of lipoate-dependent enzymes, thereby converting the octanoylated domains into lipoylated derivatives. This is Lipoyl synthase, mitochondrial from Oryza sativa subsp. indica (Rice).